The following is a 205-amino-acid chain: Urease accessory protein UreE (205 aa).

Over residues 178 to 196 the composition is skewed to basic residues; that stretch reads AHFHAGGHGHVHSGHGHGG. The interval 178–205 is disordered; sequence AHFHAGGHGHVHSGHGHGGKHGEHDAES.

This sequence belongs to the UreE family.

The protein resides in the cytoplasm. In terms of biological role, involved in urease metallocenter assembly. Binds nickel. Probably functions as a nickel donor during metallocenter assembly. This is Urease accessory protein UreE from Bordetella pertussis (strain Tohama I / ATCC BAA-589 / NCTC 13251).